A 166-amino-acid chain; its full sequence is Putative 4-hydroxy-4-methyl-2-oxoglutarate aldolase (166 aa).

Residues glycine 81–isoleucine 84 and arginine 103 each bind substrate. Aspartate 104 is an a divalent metal cation binding site.

The protein belongs to the class II aldolase/RraA-like family. In terms of assembly, homotrimer. The cofactor is a divalent metal cation.

It catalyses the reaction 4-hydroxy-4-methyl-2-oxoglutarate = 2 pyruvate. The catalysed reaction is oxaloacetate + H(+) = pyruvate + CO2. Its function is as follows. Catalyzes the aldol cleavage of 4-hydroxy-4-methyl-2-oxoglutarate (HMG) into 2 molecules of pyruvate. Also contains a secondary oxaloacetate (OAA) decarboxylase activity due to the common pyruvate enolate transition state formed following C-C bond cleavage in the retro-aldol and decarboxylation reactions. This chain is Putative 4-hydroxy-4-methyl-2-oxoglutarate aldolase, found in Corynebacterium glutamicum (strain ATCC 13032 / DSM 20300 / JCM 1318 / BCRC 11384 / CCUG 27702 / LMG 3730 / NBRC 12168 / NCIMB 10025 / NRRL B-2784 / 534).